The sequence spans 252 residues: 3-dehydroquinate dehydratase (252 aa).

3-dehydroquinate-binding positions include S21, 46 to 48 (EWR), and R82. H143 acts as the Proton donor/acceptor in catalysis. The active-site Schiff-base intermediate with substrate is the K170. Positions 213, 232, and 236 each coordinate 3-dehydroquinate.

It belongs to the type-I 3-dehydroquinase family. In terms of assembly, homodimer.

The enzyme catalyses 3-dehydroquinate = 3-dehydroshikimate + H2O. It participates in metabolic intermediate biosynthesis; chorismate biosynthesis; chorismate from D-erythrose 4-phosphate and phosphoenolpyruvate: step 3/7. Its function is as follows. Involved in the third step of the chorismate pathway, which leads to the biosynthesis of aromatic amino acids. Catalyzes the cis-dehydration of 3-dehydroquinate (DHQ) and introduces the first double bond of the aromatic ring to yield 3-dehydroshikimate. This is 3-dehydroquinate dehydratase from Shigella flexneri serotype 5b (strain 8401).